Here is a 419-residue protein sequence, read N- to C-terminus: D-galactonate dehydratase family member SEN1436 (419 aa).

2 residues coordinate substrate: Gln-45 and His-129. The Proton donor/acceptor role is filled by Tyr-160. A Mg(2+)-binding site is contributed by Asp-225. His-227 (proton donor/acceptor) is an active-site residue. Positions 251 and 277 each coordinate Mg(2+). Residues Glu-277, Arg-298, His-327, Asp-331, and Glu-354 each contribute to the substrate site.

It belongs to the mandelate racemase/muconate lactonizing enzyme family. GalD subfamily. In terms of assembly, homotetramer. Mg(2+) serves as cofactor.

It catalyses the reaction D-gluconate = 2-dehydro-3-deoxy-D-gluconate + H2O. Its function is as follows. Has low D-gluconate dehydratase activity (in vitro), suggesting that it has no significant role in D-gluconate degradation in vivo. Has no detectable activity with a panel of 70 other acid sugars (in vitro). The sequence is that of D-galactonate dehydratase family member SEN1436 from Salmonella enteritidis PT4 (strain P125109).